The sequence spans 373 residues: Histidinol-phosphate aminotransferase 2 (373 aa).

Residue K229 is modified to N6-(pyridoxal phosphate)lysine.

The protein belongs to the class-II pyridoxal-phosphate-dependent aminotransferase family. Histidinol-phosphate aminotransferase subfamily. In terms of assembly, homodimer. The cofactor is pyridoxal 5'-phosphate.

The enzyme catalyses L-histidinol phosphate + 2-oxoglutarate = 3-(imidazol-4-yl)-2-oxopropyl phosphate + L-glutamate. It functions in the pathway amino-acid biosynthesis; L-histidine biosynthesis; L-histidine from 5-phospho-alpha-D-ribose 1-diphosphate: step 7/9. The chain is Histidinol-phosphate aminotransferase 2 from Hydrogenovibrio crunogenus (strain DSM 25203 / XCL-2) (Thiomicrospira crunogena).